Reading from the N-terminus, the 196-residue chain is Orotate phosphoribosyltransferase (196 aa).

117–125 contributes to the 5-phospho-alpha-D-ribose 1-diphosphate binding site; sequence EDIVTTGLS. 2 residues coordinate orotate: T121 and R149.

The protein belongs to the purine/pyrimidine phosphoribosyltransferase family. PyrE subfamily. In terms of assembly, homodimer. Mg(2+) serves as cofactor.

The catalysed reaction is orotidine 5'-phosphate + diphosphate = orotate + 5-phospho-alpha-D-ribose 1-diphosphate. Its pathway is pyrimidine metabolism; UMP biosynthesis via de novo pathway; UMP from orotate: step 1/2. In terms of biological role, catalyzes the transfer of a ribosyl phosphate group from 5-phosphoribose 1-diphosphate to orotate, leading to the formation of orotidine monophosphate (OMP). This chain is Orotate phosphoribosyltransferase, found in Methylorubrum extorquens (strain PA1) (Methylobacterium extorquens).